The sequence spans 369 residues: Immunoglobulin superfamily member 5 (369 aa).

The N-terminal stretch at 1-24 is a signal peptide; that stretch reads MEGSWRDVLAVLVILAQLTVSGSS. Ig-like V-type domains are found at residues 25–125 and 128–217; these read YQII…LSVQ and GTLN…LTVN. Residues 25–239 lie on the Extracellular side of the membrane; it reads YQIIEGPRNV…GEGQALPTWA (215 aa). 2 N-linked (GlcNAc...) asparagine glycosylation sites follow: Asn33 and Asn45. Cysteines 46 and 109 form a disulfide. N-linked (GlcNAc...) asparagine glycosylation is found at Asn146, Asn196, and Asn217. A disulfide bridge links Cys149 with Cys201. Residues 240–260 traverse the membrane as a helical segment; the sequence is IILLAVAFSLLLILIIALIII. At 261-369 the chain is on the cytoplasmic side; that stretch reads FCCCCVSRRE…PQKIRNVTIV (109 aa). The interval 321-354 is disordered; sequence PKSGEVSLPEQRSSLPQQELDKHRPSPVTHPRVS.

The protein belongs to the immunoglobulin superfamily. In terms of assembly, interacts with MAGI1 at tight junctions, forms a tripartite complex with NPHS1. Interacts with LNX1 isoform 2 via its PDZ 2 domain, it may also interact with other isoforms containing this domain. As to expression, in kidney, it is found in glomeruli and in the proximal tubules (at protein level).

The protein resides in the apical cell membrane. It localises to the cell junction. The protein localises to the tight junction. Its function is as follows. Provides, together with MAGI1, an adhesion machinery at tight junctions, which may regulate the permeability of kidney glomerulus and small intestinal epithelial cells. Mediates calcium-independent homophilic cell adhesion. In testis, it may function as a cell adhesion molecule rather than a tight-junction protein. It may participate in the adhesion between spermatogonia-spermatogonia, spermatogonia-Sertoli cells, and Sertoli cells-Sertoli cells. This Rattus norvegicus (Rat) protein is Immunoglobulin superfamily member 5 (Igsf5).